Consider the following 463-residue polypeptide: V-type ATP synthase beta chain (463 aa).

The protein belongs to the ATPase alpha/beta chains family.

Produces ATP from ADP in the presence of a proton gradient across the membrane. The V-type beta chain is a regulatory subunit. This Halothermothrix orenii (strain H 168 / OCM 544 / DSM 9562) protein is V-type ATP synthase beta chain.